We begin with the raw amino-acid sequence, 333 residues long: Plasminogen (333 aa).

The Kringle 5 domain occupies 4 to 83 (CMFGNGKGYR…LFDYCDVPQC (80 aa)). 9 disulfides stabilise this stretch: Cys4–Cys83, Cys25–Cys66, Cys54–Cys78, Cys90–Cys208, Cys100–Cys108, Cys130–Cys146, Cys222–Cys289, Cys252–Cys268, and Cys279–Cys307. The Peptidase S1 domain maps to 104-331 (VVGGCVANPH…FVTWIEGIMR (228 aa)). Phosphoserine is present on Ser120. Catalysis depends on charge relay system residues His145 and Asp188. Ser283 serves as the catalytic Charge relay system.

It belongs to the peptidase S1 family. Plasminogen subfamily. Interacts with CSPG4 and AMOT. Interacts (via the Kringle domains) with HRG; the interaction tethers PLG to the cell surface and enhances its activation. Interacts (via Kringle 4 domain) with ADA; the interaction stimulates PLG activation when in complex with DPP4. Angiostatin: Interacts with ATP5F1A; the interaction inhibits most of the angiogenic effects of angiostatin.

The protein localises to the secreted. The enzyme catalyses Preferential cleavage: Lys-|-Xaa &gt; Arg-|-Xaa, higher selectivity than trypsin. Converts fibrin into soluble products.. Converted into plasmin by plasminogen activators, both plasminogen and its activator being bound to fibrin. Activated with urokinase and high concentrations of streptokinase. In terms of biological role, plasmin dissolves the fibrin of blood clots and acts as a proteolytic factor in a variety of other processes including embryonic development, tissue remodeling, tumor invasion, and inflammation. In ovulation, weakens the walls of the Graafian follicle. It activates the urokinase-type plasminogen activator, collagenases and several complement zymogens, such as C1, C4 and C5. Cleavage of fibronectin and laminin leads to cell detachment and apoptosis. Also cleaves fibrin, thrombospondin and von Willebrand factor. Its role in tissue remodeling and tumor invasion may be modulated by CSPG4. Binds to cells. The polypeptide is Plasminogen (PLG) (Canis lupus familiaris (Dog)).